The chain runs to 133 residues: Ribosome-binding factor A (133 aa).

The protein belongs to the RbfA family. In terms of assembly, monomer. Binds 30S ribosomal subunits, but not 50S ribosomal subunits or 70S ribosomes.

The protein resides in the cytoplasm. One of several proteins that assist in the late maturation steps of the functional core of the 30S ribosomal subunit. Associates with free 30S ribosomal subunits (but not with 30S subunits that are part of 70S ribosomes or polysomes). Required for efficient processing of 16S rRNA. May interact with the 5'-terminal helix region of 16S rRNA. The polypeptide is Ribosome-binding factor A (Acinetobacter baumannii (strain AB307-0294)).